A 358-amino-acid polypeptide reads, in one-letter code: 3-isopropylmalate dehydrogenase (358 aa).

77-90 (GPKWDNLPIDQRPE) contacts NAD(+). Residues Arg98, Arg108, Arg137, and Asp221 each coordinate substrate. Positions 221, 245, and 249 each coordinate Mg(2+). 279 to 291 (GSAPDIAHLNIAN) is an NAD(+) binding site.

The protein belongs to the isocitrate and isopropylmalate dehydrogenases family. LeuB type 1 subfamily. In terms of assembly, homodimer. Mg(2+) serves as cofactor. It depends on Mn(2+) as a cofactor.

It is found in the cytoplasm. The enzyme catalyses (2R,3S)-3-isopropylmalate + NAD(+) = 4-methyl-2-oxopentanoate + CO2 + NADH. Its pathway is amino-acid biosynthesis; L-leucine biosynthesis; L-leucine from 3-methyl-2-oxobutanoate: step 3/4. Its function is as follows. Catalyzes the oxidation of 3-carboxy-2-hydroxy-4-methylpentanoate (3-isopropylmalate) to 3-carboxy-4-methyl-2-oxopentanoate. The product decarboxylates to 4-methyl-2 oxopentanoate. In Campylobacter jejuni (strain RM1221), this protein is 3-isopropylmalate dehydrogenase.